A 378-amino-acid chain; its full sequence is tRNA-specific 2-thiouridylase MnmA (378 aa).

Residues 27 to 34 (AMSGGVDS) and Leu53 contribute to the ATP site. Catalysis depends on Cys121, which acts as the Nucleophile. A disulfide bridge links Cys121 with Cys218. Gly145 contributes to the ATP binding site. The segment at 168-170 (RDQ) is interaction with tRNA. Residue Cys218 is the Cysteine persulfide intermediate of the active site.

Belongs to the MnmA/TRMU family.

It localises to the cytoplasm. The catalysed reaction is S-sulfanyl-L-cysteinyl-[protein] + uridine(34) in tRNA + AH2 + ATP = 2-thiouridine(34) in tRNA + L-cysteinyl-[protein] + A + AMP + diphosphate + H(+). Its function is as follows. Catalyzes the 2-thiolation of uridine at the wobble position (U34) of tRNA, leading to the formation of s(2)U34. The protein is tRNA-specific 2-thiouridylase MnmA of Rhizorhabdus wittichii (strain DSM 6014 / CCUG 31198 / JCM 15750 / NBRC 105917 / EY 4224 / RW1) (Sphingomonas wittichii).